The chain runs to 400 residues: Enoyl-[acyl-carrier-protein] reductase [NADH] (400 aa).

NAD(+)-binding positions include 48 to 53 (GSSSGY), 74 to 75 (FE), 111 to 112 (DA), and 139 to 140 (LA). Residue Tyr-225 coordinates substrate. The Proton donor role is filled by Tyr-235. NAD(+) is bound by residues Lys-244 and 273-275 (VVT).

Belongs to the TER reductase family. As to quaternary structure, monomer.

The catalysed reaction is a 2,3-saturated acyl-[ACP] + NAD(+) = a (2E)-enoyl-[ACP] + NADH + H(+). Its pathway is lipid metabolism; fatty acid biosynthesis. In terms of biological role, involved in the final reduction of the elongation cycle of fatty acid synthesis (FAS II). Catalyzes the reduction of a carbon-carbon double bond in an enoyl moiety that is covalently linked to an acyl carrier protein (ACP). The sequence is that of Enoyl-[acyl-carrier-protein] reductase [NADH] from Shewanella woodyi (strain ATCC 51908 / MS32).